Consider the following 151-residue polypeptide: Nucleoside diphosphate kinase (151 aa).

ATP contacts are provided by Lys-9, Phe-57, Arg-85, Thr-91, Arg-102, and Asn-112. The active-site Pros-phosphohistidine intermediate is His-115.

Belongs to the NDK family. Mg(2+) serves as cofactor.

It is found in the cytoplasm. The enzyme catalyses a 2'-deoxyribonucleoside 5'-diphosphate + ATP = a 2'-deoxyribonucleoside 5'-triphosphate + ADP. The catalysed reaction is a ribonucleoside 5'-diphosphate + ATP = a ribonucleoside 5'-triphosphate + ADP. Major role in the synthesis of nucleoside triphosphates other than ATP. The ATP gamma phosphate is transferred to the NDP beta phosphate via a ping-pong mechanism, using a phosphorylated active-site intermediate. The polypeptide is Nucleoside diphosphate kinase (Archaeoglobus fulgidus (strain ATCC 49558 / DSM 4304 / JCM 9628 / NBRC 100126 / VC-16)).